The sequence spans 100 residues: MAKKSMIEREKKRQKLVAKYAELRKEIKEQMRLASSFEEKLNLHRKLQRLPRNSSSTRLHNRCAISGRPKAYYRDFGLSRHVFREMAHNCLLPGVTKSSW.

Belongs to the universal ribosomal protein uS14 family. In terms of assembly, part of the 30S ribosomal subunit.

The protein resides in the plastid. Its subcellular location is the chloroplast. In terms of biological role, binds 16S rRNA, required for the assembly of 30S particles. The polypeptide is Small ribosomal subunit protein uS14c (Chlorokybus atmophyticus (Soil alga)).